Here is a 111-residue protein sequence, read N- to C-terminus: Irditoxin subunit B (111 aa).

The N-terminal stretch at 1–19 (MKTLLLAVAVVAFVCLGSA) is a signal peptide. Residues 20–34 (DQLGLGRQQIDWGKG) constitute a propeptide that is removed on maturation. Q35 bears the Pyrrolidone carboxylic acid mark. Disulfide bonds link C44–C68, C47–C55, C61–C87, C91–C102, and C103–C108.

It belongs to the three-finger toxin family. Ancestral subfamily. Boigatoxin sub-subfamily. As to quaternary structure, heterodimer of A and B chains; disulfide-linked. In terms of tissue distribution, expressed by the venom gland.

It localises to the secreted. This bird and reptile-specific postsynaptic neurotoxin inhibits the chick muscle alpha-1-beta-1-gamma-delta (CHRNA1-CHRNB1-CHRNG-CHRND) nicotinic acetylcholine receptor (nAChR) 100-fold more compared with the mouse receptor. In vivo, produces rapid flaccid paralysis, dyspnea and increased respiratory rate in geckos. At sublethal doses geckos were immobilized for up to three days and then recovered. Chicks injected with lethal doses showed rapid onset of inactivity, dyspnea and neck droop, and no extended paralysis with survival was seen. In Boiga irregularis (Brown tree snake), this protein is Irditoxin subunit B.